Here is a 260-residue protein sequence, read N- to C-terminus: MAQSSKYQRKPRSGERKRSQRRLELTEEQKKQFDDLLVRTGLTFENRKLLIQAFTHSSYVNEQRIFSSSDNERLEFLGDAVLELAVSQYLFKTYKNMSEGDMTKLRASIVCEPSLARFAEELQFGKLVLLGKGEEVTGGRTRPALLADVFEAFIGALYMDQGLEPVFMFLARFMYPKIKEGAFTYKMDFKSQLQEFVQRDNRGQIRYLIVQERGPAHDREFVSDVQLNEETIGTGTGRSKKEAEQLAAKQALLALNQKES.

The segment at 1-24 is disordered; that stretch reads MAQSSKYQRKPRSGERKRSQRRLE. The segment covering 12–24 has biased composition (basic and acidic residues); the sequence is RSGERKRSQRRLE. Residues 33–162 enclose the RNase III domain; sequence FDDLLVRTGL…FIGALYMDQG (130 aa). Position 75 (Glu75) interacts with Mg(2+). Residue Asp79 is part of the active site. Asp148 and Glu151 together coordinate Mg(2+). The active site involves Glu151. A DRBM domain is found at 188 to 257; the sequence is DFKSQLQEFV…AKQALLALNQ (70 aa).

Belongs to the ribonuclease III family. In terms of assembly, homodimer. It depends on Mg(2+) as a cofactor.

The protein localises to the cytoplasm. It catalyses the reaction Endonucleolytic cleavage to 5'-phosphomonoester.. In terms of biological role, digests double-stranded RNA. Involved in the processing of primary rRNA transcript to yield the immediate precursors to the large and small rRNAs (23S and 16S). Processes some mRNAs, and tRNAs when they are encoded in the rRNA operon. Processes pre-crRNA and tracrRNA of type II CRISPR loci if present in the organism. This Shouchella clausii (strain KSM-K16) (Alkalihalobacillus clausii) protein is Ribonuclease 3.